The chain runs to 185 residues: Protein GrpE (185 aa).

Residues 1 to 37 (MSEEKQTPEQEAEVEAQEEAVQADTEEVTQDEQSAFQ) form a disordered region.

This sequence belongs to the GrpE family. As to quaternary structure, homodimer.

It localises to the cytoplasm. Functionally, participates actively in the response to hyperosmotic and heat shock by preventing the aggregation of stress-denatured proteins, in association with DnaK and GrpE. It is the nucleotide exchange factor for DnaK and may function as a thermosensor. Unfolded proteins bind initially to DnaJ; upon interaction with the DnaJ-bound protein, DnaK hydrolyzes its bound ATP, resulting in the formation of a stable complex. GrpE releases ADP from DnaK; ATP binding to DnaK triggers the release of the substrate protein, thus completing the reaction cycle. Several rounds of ATP-dependent interactions between DnaJ, DnaK and GrpE are required for fully efficient folding. The polypeptide is Protein GrpE (Bacillus pumilus (strain SAFR-032)).